The sequence spans 363 residues: L-serine dehydratase/L-threonine deaminase (363 aa).

Ala-2 carries the N-acetylalanine modification. N6-(pyridoxal phosphate)lysine is present on Lys-41. The disordered stretch occupies residues 74–98 (RGRSHSGDEQPHVRSQALLPDTPSP). Residue Pro-164 coordinates pyridoxal 5'-phosphate.

Belongs to the serine/threonine dehydratase family. In terms of assembly, homodimer. Pyridoxal 5'-phosphate is required as a cofactor. In terms of tissue distribution, predominantly expressed in the periportal regions of the liver.

Its subcellular location is the cytoplasm. The catalysed reaction is L-serine = pyruvate + NH4(+). It catalyses the reaction L-threonine = 2-oxobutanoate + NH4(+). It participates in carbohydrate biosynthesis; gluconeogenesis. In terms of biological role, catalyzes the pyridoxal-phosphate-dependent dehydrative deamination of L-threonine and L-serine to ammonia and alpha-ketobutyrate and pyruvate, respectively. The chain is L-serine dehydratase/L-threonine deaminase (Sds) from Rattus norvegicus (Rat).